Here is a 618-residue protein sequence, read N- to C-terminus: Glutamine--fructose-6-phosphate aminotransferase [isomerizing] (618 aa).

C2 functions as the Nucleophile; for GATase activity in the catalytic mechanism. A Glutamine amidotransferase type-2 domain is found at 2 to 226; it reads CGIVGYAGRN…DFETAVLSPT (225 aa). The segment at 69 to 94 is disordered; sequence HTRWATHGRPSTKNAHPHNSGGNPGK. SIS domains are found at residues 295-434 and 467-608; these read SEDE…VRDR and CAEG…IDKP. K613 functions as the For Fru-6P isomerization activity in the catalytic mechanism.

As to quaternary structure, homodimer.

Its subcellular location is the cytoplasm. It carries out the reaction D-fructose 6-phosphate + L-glutamine = D-glucosamine 6-phosphate + L-glutamate. In terms of biological role, catalyzes the first step in hexosamine metabolism, converting fructose-6P into glucosamine-6P using glutamine as a nitrogen source. This is Glutamine--fructose-6-phosphate aminotransferase [isomerizing] from Methanosarcina acetivorans (strain ATCC 35395 / DSM 2834 / JCM 12185 / C2A).